Reading from the N-terminus, the 321-residue chain is Lipoyl synthase (321 aa).

Positions 68, 73, 79, 94, 98, 101, and 308 each coordinate [4Fe-4S] cluster. In terms of domain architecture, Radical SAM core spans 80–297 (FNHGTATFMI…KEIALELGFT (218 aa)).

It belongs to the radical SAM superfamily. Lipoyl synthase family. [4Fe-4S] cluster serves as cofactor.

It localises to the cytoplasm. The catalysed reaction is [[Fe-S] cluster scaffold protein carrying a second [4Fe-4S](2+) cluster] + N(6)-octanoyl-L-lysyl-[protein] + 2 oxidized [2Fe-2S]-[ferredoxin] + 2 S-adenosyl-L-methionine + 4 H(+) = [[Fe-S] cluster scaffold protein] + N(6)-[(R)-dihydrolipoyl]-L-lysyl-[protein] + 4 Fe(3+) + 2 hydrogen sulfide + 2 5'-deoxyadenosine + 2 L-methionine + 2 reduced [2Fe-2S]-[ferredoxin]. The protein operates within protein modification; protein lipoylation via endogenous pathway; protein N(6)-(lipoyl)lysine from octanoyl-[acyl-carrier-protein]: step 2/2. In terms of biological role, catalyzes the radical-mediated insertion of two sulfur atoms into the C-6 and C-8 positions of the octanoyl moiety bound to the lipoyl domains of lipoate-dependent enzymes, thereby converting the octanoylated domains into lipoylated derivatives. This Vibrio vulnificus (strain CMCP6) protein is Lipoyl synthase.